A 110-amino-acid chain; its full sequence is Iron-sulfur cluster assembly protein CyaY (110 aa).

The protein belongs to the frataxin family.

Its function is as follows. Involved in iron-sulfur (Fe-S) cluster assembly. May act as a regulator of Fe-S biogenesis. This chain is Iron-sulfur cluster assembly protein CyaY, found in Pseudomonas entomophila (strain L48).